Here is a 185-residue protein sequence, read N- to C-terminus: Ribosome-recycling factor (185 aa).

It belongs to the RRF family.

The protein resides in the cytoplasm. Functionally, responsible for the release of ribosomes from messenger RNA at the termination of protein biosynthesis. May increase the efficiency of translation by recycling ribosomes from one round of translation to another. The chain is Ribosome-recycling factor from Roseiflexus castenholzii (strain DSM 13941 / HLO8).